Consider the following 161-residue polypeptide: Large ribosomal subunit protein uL30m (161 aa).

The N-terminal 34 residues, 1 to 34 (MAGILRSIVQRPPGRLQTATKGVEPLVCVDWIRH), are a transit peptide targeting the mitochondrion.

The protein belongs to the universal ribosomal protein uL30 family. As to quaternary structure, component of the mitochondrial ribosome large subunit (39S) which comprises a 16S rRNA and about 50 distinct proteins.

It localises to the mitochondrion. The chain is Large ribosomal subunit protein uL30m (MRPL30) from Bos taurus (Bovine).